Consider the following 539-residue polypeptide: Chaperonin GroEL 1 (539 aa).

ATP is bound by residues 29–32 (TLGP), 86–90 (DGTTT), G413, 478–480 (NAA), and D494. The segment at 520 to 539 (IVDKPAEPEDDGHGHHGHAH) is disordered. Residues 523–533 (KPAEPEDDGHG) show a composition bias toward basic and acidic residues.

Belongs to the chaperonin (HSP60) family. Forms a cylinder of 14 subunits composed of two heptameric rings stacked back-to-back. Interacts with the co-chaperonin GroES.

It is found in the cytoplasm. It carries out the reaction ATP + H2O + a folded polypeptide = ADP + phosphate + an unfolded polypeptide.. Functionally, together with its co-chaperonin GroES, plays an essential role in assisting protein folding. The GroEL-GroES system forms a nano-cage that allows encapsulation of the non-native substrate proteins and provides a physical environment optimized to promote and accelerate protein folding. In Mycobacterium ulcerans (strain Agy99), this protein is Chaperonin GroEL 1.